A 152-amino-acid polypeptide reads, in one-letter code: Perlwapin (152 aa).

The N-terminal stretch at 1–18 (LILCVVVCTAAVLGTAAG) is a signal peptide. The WAP 1 domain maps to 19–61 (YESQLPGCPPGAYPAICARYCYSDRDCASGYYCCNTGCLNICV). Intrachain disulfides connect Cys26/Cys52, Cys35/Cys56, Cys39/Cys51, Cys45/Cys60, Cys69/Cys95, Cys77/Cys100, Cys82/Cys94, Cys88/Cys103, Cys112/Cys139, Cys122/Cys142, Cys126/Cys138, and Cys132/Cys146. One can recognise a WAP 2; atypical domain in the interval 62 to 107 (PKPKPGLCPSITQSPCRGNVCNNDQDCPGNRKCCGKPGCKRCYRPK). One can recognise a WAP 3 domain in the interval 108–150 (KPGSCPARKYEAGPCVVYCDGDFDCPGDKKCCGGCPRLCEKPC).

In terms of tissue distribution, component of the acid-soluble and acid-insoluble organic matrix of prismatic shell layers (at protein level).

Its subcellular location is the secreted. Its function is as follows. Inhibits growth of calcium carbonate crystals. May inhibit growth of certain crystallographic planes in the mineral phase of nacre in the shell. The protein is Perlwapin of Haliotis asinina (Donkey's ear abalone).